Consider the following 350-residue polypeptide: Alcohol dehydrogenase (350 aa).

Position 46 (C46) interacts with Zn(2+). Positions 47, 48, and 51 each coordinate NAD(+). Zn(2+) is bound by residues H69, C100, C103, C106, C114, and C156. NAD(+) is bound by residues G183, G184, L185, and D204. T205 carries the phosphothreonine modification. 2 residues coordinate NAD(+): K209 and F224. Phosphothreonine is present on T250. NAD(+) contacts are provided by V271, M273, S296, V298, and R343.

This sequence belongs to the zinc-containing alcohol dehydrogenase family. In terms of assembly, homotetramer. Zn(2+) serves as cofactor.

It is found in the cytoplasm. It catalyses the reaction a primary alcohol + NAD(+) = an aldehyde + NADH + H(+). It carries out the reaction a secondary alcohol + NAD(+) = a ketone + NADH + H(+). The enzyme catalyses ethanol + NAD(+) = acetaldehyde + NADH + H(+). Its function is as follows. Reduces acetaldehyde to ethanol during the fermentation of glucose. The chain is Alcohol dehydrogenase (adh1) from Schizosaccharomyces pombe (strain 972 / ATCC 24843) (Fission yeast).